The primary structure comprises 787 residues: Probable phosphoketolase (787 aa).

The protein belongs to the XFP family. The cofactor is thiamine diphosphate.

This is Probable phosphoketolase from Pediococcus pentosaceus (strain ATCC 25745 / CCUG 21536 / LMG 10740 / 183-1w).